The sequence spans 284 residues: MRFSALLVTLGLTGALATPTLVSREAPAVGVISDISAQTSALASAVSSYNGGDPSAVKSASEKLVSTINSGVDTVKSGPALSTADALALTSPVQDLTKQVEGVIDDLISKKDKFVAANAGGTVYEDLKAQYTAADSLAKAISAKVPESLSDIAAQLSAGITAAIQKGIDAYKDAASSTGTASSSAPATETATATETSTATGTVTETATSTPVIPTGTASGSASATPSTTATPTTGGSGSGSGSSTGTATASTSTNLLSTGAASKEHFSYSLGGAVVAAAIAVAL.

Residues 1–17 form the signal peptide; sequence MRFSALLVTLGLTGALA. Low complexity predominate over residues 176-234; that stretch reads SSTGTASSSAPATETATATETSTATGTVTETATSTPVIPTGTASGSASATPSTTATPTT. A disordered region spans residues 176-252; it reads SSTGTASSSA…SSTGTATAST (77 aa).

The protein belongs to the cell wall mannoprotein 1 family. Galactomannoprotein, glycosylated.

It localises to the secreted. The protein localises to the cell wall. Functionally, constitutive protein of the cell wall. Antigen target of host humoral immune response. The polypeptide is Cell wall mannoprotein 1 (Aspergillus fumigatus (Neosartorya fumigata)).